Consider the following 466-residue polypeptide: F-box/LRR-repeat protein fbxl-1 (466 aa).

The F-box domain maps to 54–100 (SLINRVLPKEVLLKVFSFLDTKALCRSAQVCRSWSILALDGSNWQRV). 11 LRR repeats span residues 122–147 (GGFL…FTSR), 148–173 (CPNL…LGRY), 174–199 (CHKL…IGDG), 200–225 (CPNL…ILSN), 226–251 (CKSL…VEAH), 252–277 (MGAI…IANG), 278–303 (ATAL…LGQH), 304–329 (SHNL…LARG), 330–355 (CRQL…LANN), 356–381 (CTAL…LASK), and 408–433 (CKAL…FQHH).

As to quaternary structure, component of the SCF (SKP1-CUL1-F-box protein)-type E3 ubiquitin ligase complex. As to expression, expressed in neuroglial cells such as the socket cell and sheath cell, neurosecretory motor neurons and regions around the pharynx and anus.

Its subcellular location is the perikaryon. The protein localises to the cell projection. It is found in the dendrite. It localises to the cilium. The protein resides in the axon. Functionally, substrate-recognition component of the SCF (SKP1-CUL1-F-box protein)-type E3 ubiquitin ligase complex. Plays a role in regulating the entry into the dauer state. In hermaphrodites, may play a role in modulating the rate of defecation. The sequence is that of F-box/LRR-repeat protein fbxl-1 from Caenorhabditis elegans.